A 205-amino-acid polypeptide reads, in one-letter code: GTP cyclohydrolase-2 (205 aa).

49-53 (RLHSE) serves as a coordination point for GTP. Cysteine 54, cysteine 65, and cysteine 67 together coordinate Zn(2+). GTP contacts are provided by residues glutamine 70, 92–94 (EGR), and threonine 114. Catalysis depends on aspartate 126, which acts as the Proton acceptor. The active-site Nucleophile is the arginine 128. GTP is bound by residues threonine 149 and lysine 154.

Belongs to the GTP cyclohydrolase II family. Zn(2+) is required as a cofactor.

The catalysed reaction is GTP + 4 H2O = 2,5-diamino-6-hydroxy-4-(5-phosphoribosylamino)-pyrimidine + formate + 2 phosphate + 3 H(+). The protein operates within cofactor biosynthesis; riboflavin biosynthesis; 5-amino-6-(D-ribitylamino)uracil from GTP: step 1/4. Catalyzes the conversion of GTP to 2,5-diamino-6-ribosylamino-4(3H)-pyrimidinone 5'-phosphate (DARP), formate and pyrophosphate. In Pseudomonas putida (strain GB-1), this protein is GTP cyclohydrolase-2.